Consider the following 390-residue polypeptide: Na(+)/H(+) antiporter NhaA (390 aa).

The next 12 membrane-spanning stretches (helical) occupy residues 14–34 (AAGGIVLIAAAALAMLLANLN), 61–81 (MLLWVNDALMAVFFLLVGLEV), 97–117 (SLPVIAALGGMVLPAALYLAF), 126–146 (AGWAIPAATDIAFALGILALL), 156–176 (VFLMALAIIDDLGAIVIIALF), 181–201 (LSMVSLMVAAGAIAVLAVLNL), 221–241 (VLKSGVHATLAGVIIGFFVPL), 256–276 (ALHPWVGFLILPLFAFANAGV), 280–300 (GVTLAGLASLLPLGIIAGLFI), 305–325 (GISLFCALAVKLKWATLPPGV), 330–350 (ILAVGVLCGIGFTMSIFIASL), and 362–382 (WAKLGILVGSLLAAVIGYALL).

It belongs to the NhaA Na(+)/H(+) (TC 2.A.33) antiporter family.

It is found in the cell inner membrane. It catalyses the reaction Na(+)(in) + 2 H(+)(out) = Na(+)(out) + 2 H(+)(in). Functionally, na(+)/H(+) antiporter that extrudes sodium in exchange for external protons. In Cronobacter sakazakii (strain ATCC BAA-894) (Enterobacter sakazakii), this protein is Na(+)/H(+) antiporter NhaA.